The primary structure comprises 554 residues: Glutamine--tRNA ligase (554 aa).

A 'HIGH' region motif is present at residues P34–H44. Residues E35–N37 and H41–S47 each bind ATP. Positions 67 and 212 each coordinate L-glutamine. ATP is bound by residues T231, R261–L262, and M269–K271. The 'KMSKS' region motif lies at V268–R272. The interaction with tRNA stretch occupies residues T317–E324.

This sequence belongs to the class-I aminoacyl-tRNA synthetase family. In terms of assembly, monomer.

It localises to the cytoplasm. The catalysed reaction is tRNA(Gln) + L-glutamine + ATP = L-glutaminyl-tRNA(Gln) + AMP + diphosphate. In Shigella dysenteriae serotype 1 (strain Sd197), this protein is Glutamine--tRNA ligase.